A 207-amino-acid polypeptide reads, in one-letter code: Proteasome subunit beta 1 (207 aa).

Residues 1 to 9 constitute a propeptide, removed in mature form; by autocatalysis; it reads MWALDKIKG. Residue threonine 10 is the Nucleophile of the active site.

The protein belongs to the peptidase T1B family. As to quaternary structure, the 20S proteasome core is composed of 14 alpha and 14 beta subunits that assemble into four stacked heptameric rings, resulting in a barrel-shaped structure. The two inner rings, each composed of seven catalytic beta subunits, are sandwiched by two outer rings, each composed of seven alpha subunits. The catalytic chamber with the active sites is on the inside of the barrel. Has a gated structure, the ends of the cylinder being occluded by the N-termini of the alpha-subunits. Is capped at one or both ends by the proteasome regulatory ATPase, PAN.

It localises to the cytoplasm. It carries out the reaction Cleavage of peptide bonds with very broad specificity.. The formation of the proteasomal ATPase PAN-20S proteasome complex, via the docking of the C-termini of PAN into the intersubunit pockets in the alpha-rings, triggers opening of the gate for substrate entry. Interconversion between the open-gate and close-gate conformations leads to a dynamic regulation of the 20S proteasome proteolysis activity. Component of the proteasome core, a large protease complex with broad specificity involved in protein degradation. The polypeptide is Proteasome subunit beta 1 (Thermococcus sibiricus (strain DSM 12597 / MM 739)).